Consider the following 35-residue polypeptide: Dermonecrotic toxin LgSicTox-beta-LOXN4 (35 aa).

Aspartate 20 contributes to the Mg(2+) binding site.

This sequence belongs to the arthropod phospholipase D family. Class II subfamily. It depends on Mg(2+) as a cofactor. Contains 2 disulfide bonds. In terms of tissue distribution, expressed by the venom gland.

It is found in the secreted. It catalyses the reaction an N-(acyl)-sphingosylphosphocholine = an N-(acyl)-sphingosyl-1,3-cyclic phosphate + choline. It carries out the reaction an N-(acyl)-sphingosylphosphoethanolamine = an N-(acyl)-sphingosyl-1,3-cyclic phosphate + ethanolamine. The catalysed reaction is a 1-acyl-sn-glycero-3-phosphocholine = a 1-acyl-sn-glycero-2,3-cyclic phosphate + choline. The enzyme catalyses a 1-acyl-sn-glycero-3-phosphoethanolamine = a 1-acyl-sn-glycero-2,3-cyclic phosphate + ethanolamine. Dermonecrotic toxins cleave the phosphodiester linkage between the phosphate and headgroup of certain phospholipids (sphingolipid and lysolipid substrates), forming an alcohol (often choline) and a cyclic phosphate. This toxin acts on sphingomyelin (SM). It may also act on ceramide phosphoethanolamine (CPE), lysophosphatidylcholine (LPC) and lysophosphatidylethanolamine (LPE), but not on lysophosphatidylserine (LPS), and lysophosphatidylglycerol (LPG). It acts by transphosphatidylation, releasing exclusively cyclic phosphate products as second products. Induces dermonecrosis, hemolysis, increased vascular permeability, edema, inflammatory response, and platelet aggregation. This chain is Dermonecrotic toxin LgSicTox-beta-LOXN4, found in Loxosceles gaucho (Spider).